Reading from the N-terminus, the 513-residue chain is MTAATISPSFNANVKQNKPPSFPSESSNRRPKTRDVASRYLGGTSSFFHQSSPKRCQSPIVTRPVTPSSVATNRPQSTPRRESLDRREVSKAERMLLTSGRSLFASFQADSFTPGTLERRKTTSSATISKSGGGKQEKLKLSDQWPRSLQPSCLSSRSVDFTDTRKKLIGSGNGVARALQDSMVSNRPVSRERITSVDLETESVSSGSSNGRGKMLPARGNVVKARVSQDRLEPSSHGLRKISVDSSVLSPKEANSLSSPRGTSIARGLSPSREVVPPRGVSPSDRMSPLRVRSSLSKNTPLIPHFAVDGKEKIRDNGVADAHLLRLLHSRLLQWQFANARANAVISSQKMREERRLYNAWRSISNLYNSVSMKRIEMQHLKQNLKLISILNMQMGHLEEWLVIDRNYMGSLVGAAEALKGSTLCLPVDCGAMVNVQSVKDAICSAVDVMQAMASSICLLLPKVGKISSLAAELGRVNAKDEGMLDVCRDLLNTISALQVTECSLRTQVTQLQ.

3 stretches are compositionally biased toward polar residues: residues 1–26 (MTAA…PSES), 43–55 (GTSS…SPKR), and 65–78 (VTPS…PQST). 3 disordered regions span residues 1-89 (MTAA…RREV), 115-144 (GTLE…LSDQ), and 184-293 (VSNR…LRVR). A compositionally biased stretch (basic and acidic residues) spans 79–89 (PRRESLDRREV). Composition is skewed to polar residues over residues 202-211 (ESVSSGSSNG) and 244-262 (VDSS…SPRG). Residues 334 to 337 (QWQF) carry the QWRF motif motif.

The protein belongs to the QWRF family.

The sequence is that of QWRF motif-containing protein 9 (QWRF9) from Arabidopsis thaliana (Mouse-ear cress).